We begin with the raw amino-acid sequence, 172 residues long: Adenine phosphoribosyltransferase (172 aa).

This sequence belongs to the purine/pyrimidine phosphoribosyltransferase family. Homodimer.

Its subcellular location is the cytoplasm. It carries out the reaction AMP + diphosphate = 5-phospho-alpha-D-ribose 1-diphosphate + adenine. The protein operates within purine metabolism; AMP biosynthesis via salvage pathway; AMP from adenine: step 1/1. In terms of biological role, catalyzes a salvage reaction resulting in the formation of AMP, that is energically less costly than de novo synthesis. In Rippkaea orientalis (strain PCC 8801 / RF-1) (Cyanothece sp. (strain PCC 8801)), this protein is Adenine phosphoribosyltransferase.